The primary structure comprises 155 residues: 6,7-dimethyl-8-ribityllumazine synthase (155 aa).

5-amino-6-(D-ribitylamino)uracil-binding positions include F23, 57–59 (AFE), and 81–83 (AVI). 86 to 87 (ST) serves as a coordination point for (2S)-2-hydroxy-3-oxobutyl phosphate. The active-site Proton donor is H89. Residue F114 participates in 5-amino-6-(D-ribitylamino)uracil binding. Position 128 (R128) interacts with (2S)-2-hydroxy-3-oxobutyl phosphate.

It belongs to the DMRL synthase family.

It carries out the reaction (2S)-2-hydroxy-3-oxobutyl phosphate + 5-amino-6-(D-ribitylamino)uracil = 6,7-dimethyl-8-(1-D-ribityl)lumazine + phosphate + 2 H2O + H(+). It participates in cofactor biosynthesis; riboflavin biosynthesis; riboflavin from 2-hydroxy-3-oxobutyl phosphate and 5-amino-6-(D-ribitylamino)uracil: step 1/2. In terms of biological role, catalyzes the formation of 6,7-dimethyl-8-ribityllumazine by condensation of 5-amino-6-(D-ribitylamino)uracil with 3,4-dihydroxy-2-butanone 4-phosphate. This is the penultimate step in the biosynthesis of riboflavin. This chain is 6,7-dimethyl-8-ribityllumazine synthase, found in Geobacter metallireducens (strain ATCC 53774 / DSM 7210 / GS-15).